A 2561-amino-acid chain; its full sequence is Squalestatin hexaketide synthase (2561 aa).

A disordered region spans residues 1–77 (MDVSKEEGQR…NGTTNITPEF (77 aa)). Residues 20–74 (NETTNGHTNGYTNGHTNGHTNGTTNATTNGTTNGTMNGTTNGTTNRTTNGTTNIT) are compositionally biased toward low complexity. Residues 83-503 (QVPVAICGIG…GSNTHIIIDS (421 aa)) form the Ketosynthase family 3 (KS3) domain. Residues Cys-253, His-390, and His-427 each act as for beta-ketoacyl synthase activity in the active site. The interval 603–925 (FIFTGQGAQW…LEAIGKLFCF (323 aa)) is malonyl-CoA:ACP transacylase (MAT) domain. Residues 972–1101 (HELLGERSLE…GLVTASVVIS (130 aa)) form an N-terminal hotdog fold region. Residues 972-1253 (HELLGERSLE…RGFKCKRTDE (282 aa)) are dehydratase (DH) domain. A PKS/mFAS DH domain is found at 972 to 1257 (HELLGERSLE…CKRTDESFIQ (286 aa)). His-1004 (proton acceptor; for dehydratase activity) is an active-site residue. Positions 1112 to 1257 (TFPRKVDTSR…CKRTDESFIQ (146 aa)) are C-terminal hotdog fold. Asp-1174 functions as the Proton donor; for dehydratase activity in the catalytic mechanism. The interval 1421-1599 (SFFQAAGLNK…GFEGAGTVVL (179 aa)) is methyltransferase (CMet) domain. An enoyl reductase (ER) (ER) domain region spans residues 1826 to 2146 (GMLNTLHWVG…RGVHMGRIVV (321 aa)). A ketoreductase (KR) domain region spans residues 2170–2343 (STYLLTGGMG…PASVIDIAAI (174 aa)). Positions 2472–2550 (VLFAQEIAKR…SLGRLATKRL (79 aa)) constitute a Carrier domain. Position 2509 is an O-(pantetheine 4'-phosphoryl)serine (Ser-2509).

It functions in the pathway secondary metabolite biosynthesis. Functionally, highly reducing polyketide synthase (HR-PKS); part of the gene cluster that mediates the biosynthesis of squalestatin S1 (SQS1, also known as zaragozic acid A), a heavily oxidized fungal polyketide that offers potent cholesterol lowering activity by targeting squalene synthase (SS). SQS1 is composed of a 2,8-dioxobicyclic[3.2.1]octane-3,4,5-tricarboxyclic acid core that is connected to two lipophilic polyketide arms. These initial steps feature the priming of an unusual benzoic acid starter unit onto the highly reducing polyketide synthase pks2, followed by oxaloacetate extension and product release to generate a tricarboxylic acid containing product. The phenylalanine ammonia lyase (PAL) M7 and the acyl-CoA ligase M9 are involved in transforming phenylalanine into benzoyl-CoA. The citrate synthase-like protein R3 is involved in connecting the C-alpha-carbons of the hexaketide chain and oxaloacetate to afford the tricarboxylic acid unit. The potential hydrolytic enzymes, M8 and M10, are in close proximity to pks2 and may participate in product release. On the other side, the tetraketide arm is synthesized by a the squalestatin tetraketide synthase pks1 and enzymatically esterified to the core in the last biosynthetic step, by the acetyltransferase M4. The biosynthesis of the tetraketide must involve 3 rounds of chain extension. After the first and second rounds methyl-transfer occurs, and in all rounds of extension the ketoreductase and dehydratase are active. The enoyl reductase and C-MeT of pks1 are not active in the final round of extension. The acetyltransferase M4 appears to have a broad substrate selectivity for its acyl CoA substrate, allowing the in vitro synthesis of novel squalestatins. The biosynthesis of SQS1 requires several oxidative steps likely performed by oxidoreductases M1, R1 and R2. Finally, in support of the identification of the cluster as being responsible for SQS1 production, the cluster contains a gene encoding a putative squalene synthase (SS) R6, suggesting a likely mechanism for self-resistance. This chain is Squalestatin hexaketide synthase, found in Phoma sp. (strain ATCC 20986 / MF5453).